A 118-amino-acid polypeptide reads, in one-letter code: Large ribosomal subunit protein bL19 (118 aa).

The protein belongs to the bacterial ribosomal protein bL19 family.

Functionally, this protein is located at the 30S-50S ribosomal subunit interface and may play a role in the structure and function of the aminoacyl-tRNA binding site. The chain is Large ribosomal subunit protein bL19 from Helicobacter pylori (strain HPAG1).